The following is a 33-amino-acid chain: PRRRRSSSRPVRRRRRPRRVSRRRRRRGGRRRR.

The segment at 1 to 33 (PRRRRSSSRPVRRRRRPRRVSRRRRRRGGRRRR) is disordered.

As to expression, testis.

The protein localises to the nucleus. Its subcellular location is the chromosome. Functionally, protamines substitute for histones in the chromatin of sperm during the haploid phase of spermatogenesis. They compact sperm DNA into a highly condensed, stable and inactive complex. This chain is Protamine-1A, found in Oncorhynchus mykiss (Rainbow trout).